Consider the following 444-residue polypeptide: MRVLHLASEVFPFSRSGGLGDVLGALPAVQARLGEDAEVTVLSPWYASLQGEPQELWRGEAWGEQAWLGELRQDGVRYLFLGLNEFQRPGLYHPDDVERFCAFGRAALPALDAVGVTPDVLHGHDWQAGLVVAHARLRGLRTAFSVHNLQYQGRWNLHEAAGWTGLPDWTFGPDGVEFFGDLNLMKAGLNFAGHVTTVSPTYAQEITTPQYGEGLEGLLVRLTHEGRLSGILNGLDQDRWNPRTDPDIAAYSDPAGKAGAVKALRQEFGLDDAPILATVSRLADQKGMDLLITALPELVRDWNVVVLGGGDPLLEAALTGWANHPRVAFASGMNEPLAHRIYAGAHAFAMPSRFEPCGLSQLIAMRYGTLPIVRETGGLADTVPPEVGFRFADATAPAFLQACREAQAAFQDPAQWQTRATRAMSLDFSWDGPARQYLELYRGL.

Arg-15 contacts ADP-alpha-D-glucose.

Belongs to the glycosyltransferase 1 family. Bacterial/plant glycogen synthase subfamily.

The catalysed reaction is [(1-&gt;4)-alpha-D-glucosyl](n) + ADP-alpha-D-glucose = [(1-&gt;4)-alpha-D-glucosyl](n+1) + ADP + H(+). It participates in glycan biosynthesis; glycogen biosynthesis. In terms of biological role, synthesizes alpha-1,4-glucan chains using ADP-glucose. The chain is Glycogen synthase from Deinococcus radiodurans (strain ATCC 13939 / DSM 20539 / JCM 16871 / CCUG 27074 / LMG 4051 / NBRC 15346 / NCIMB 9279 / VKM B-1422 / R1).